A 134-amino-acid polypeptide reads, in one-letter code: MIKKYEGCFLFRSEELEYKSALEEVKKQLVAFGAVDFVENSIGERALEYPVRKQLRGRYEIIEFKMASDNLRELEAQLKLIKNLLRYMILVKINRKVSVKKVKRRNFREYRDNKDIKEKEQPSESNVDADLKVN.

A compositionally biased stretch (basic and acidic residues) spans 113–122; the sequence is NKDIKEKEQP. Positions 113–134 are disordered; it reads NKDIKEKEQPSESNVDADLKVN.

The protein belongs to the bacterial ribosomal protein bS6 family.

Its function is as follows. Binds together with bS18 to 16S ribosomal RNA. This is Small ribosomal subunit protein bS6 from Borrelia recurrentis (strain A1).